Here is a 348-residue protein sequence, read N- to C-terminus: Dihydroorotase (348 aa).

2 residues coordinate Zn(2+): H14 and H16. Substrate-binding positions include 16 to 18 and N42; that span reads HLR. Zn(2+)-binding residues include K100, H137, and H175. At K100 the chain carries N6-carboxylysine. H137 serves as a coordination point for substrate. L220 serves as a coordination point for substrate. Zn(2+) is bound at residue D248. D248 is a catalytic residue. H252 and A264 together coordinate substrate.

Belongs to the metallo-dependent hydrolases superfamily. DHOase family. Class II DHOase subfamily. As to quaternary structure, homodimer. The cofactor is Zn(2+).

It catalyses the reaction (S)-dihydroorotate + H2O = N-carbamoyl-L-aspartate + H(+). Its pathway is pyrimidine metabolism; UMP biosynthesis via de novo pathway; (S)-dihydroorotate from bicarbonate: step 3/3. In terms of biological role, catalyzes the reversible cyclization of carbamoyl aspartate to dihydroorotate. This is Dihydroorotase from Pseudomonas aeruginosa (strain UCBPP-PA14).